The following is a 116-amino-acid chain: Large ribosomal subunit protein bL19 (116 aa).

It belongs to the bacterial ribosomal protein bL19 family.

In terms of biological role, this protein is located at the 30S-50S ribosomal subunit interface and may play a role in the structure and function of the aminoacyl-tRNA binding site. This is Large ribosomal subunit protein bL19 from Ectopseudomonas mendocina (strain ymp) (Pseudomonas mendocina).